The chain runs to 123 residues: Small ribosomal subunit protein uS12c (123 aa).

It belongs to the universal ribosomal protein uS12 family. Part of the 30S ribosomal subunit.

The protein localises to the plastid. The protein resides in the chloroplast. In terms of biological role, with S4 and S5 plays an important role in translational accuracy. Located at the interface of the 30S and 50S subunits. This is Small ribosomal subunit protein uS12c (rps12) from Huperzia lucidula (Shining clubmoss).